Here is a 94-residue protein sequence, read N- to C-terminus: uncharacterized protein (94 aa).

Positions 33 to 42 are enriched in polar residues; sequence INSLPTFTKP. The tract at residues 33 to 57 is disordered; it reads INSLPTFTKPNDSNNNVNKSSNDGV. Positions 43–57 are enriched in low complexity; the sequence is NDSNNNVNKSSNDGV.

This is an uncharacterized protein from Dictyostelium discoideum (Social amoeba).